A 906-amino-acid polypeptide reads, in one-letter code: Peroxisomal hydratase-dehydrogenase-epimerase (906 aa).

Short-chain dehydrogenase like stretches follow at residues 5–228 (DFKD…SSAE) and 319–532 (SLKD…GTDD). Residues I13, K52, N98, and K131 each coordinate NADP(+). Active-site proton donor residues include S149 and Y163. Positions 163 and 167 each coordinate NADP(+). The active-site Proton acceptor is Y163. K167 functions as the Lowers pKa of active site Tyr in the catalytic mechanism. Residue Y467 is the Proton acceptor of the active site. Residues 600 to 633 (AVGGDDDDDDEDEEEDEGDEEEDEEDEEEDDPVW) form a disordered region. Residues 603–630 (GDDDDDDEDEEEDEGDEEEDEEDEEEDD) are compositionally biased toward acidic residues. Residues H699, G700, K729, Y757, D808, N810, G831, F856, T857, and G858 each contribute to the (3R)-3-hydroxydecanoyl-CoA site. Residues 782-893 (APKRAPDYQV…VVDRGTIAIN (112 aa)) enclose the MaoC-like domain. Residues 904-906 (AKI) carry the Microbody targeting signal motif.

It belongs to the short-chain dehydrogenases/reductases (SDR) family. Monomer.

It localises to the peroxisome. The catalysed reaction is a (3R)-3-hydroxyacyl-CoA = a (2E)-enoyl-CoA + H2O. It carries out the reaction a (3R)-3-hydroxyacyl-CoA + NAD(+) = a 3-oxoacyl-CoA + NADH + H(+). It functions in the pathway lipid metabolism; fatty acid beta-oxidation. In terms of biological role, second trifunctional enzyme acting on the beta-oxidation pathway for fatty acids, possessing hydratase-dehydrogenase-epimerase activities. Converts trans-2-enoyl-CoA via D-3-hydroxyacyl-CoA to 3-ketoacyl-CoA. In Candida tropicalis (Yeast), this protein is Peroxisomal hydratase-dehydrogenase-epimerase.